We begin with the raw amino-acid sequence, 322 residues long: Protein farnesyltransferase/geranylgeranyltransferase type-1 subunit alpha (322 aa).

Residues 1 to 27 (MSSSEEDDGYVPFSKRPEWSDVKPLAQ) are disordered. 6 PFTA repeats span residues 62-95 (RVLDLLEEVIQENPSNYTIWYYRREVLKAIEQDE), 103-136 (QEMNLLNDMGETDPKNYQIWNHRRFIVEKYIGSD), 138-171 (KEKEFLSGVLLEDAKNYHAWSHRQWLLKTYRDWN), 173-205 (ELAMVDKLLSLDHRNNSVWNHRFFVISNLNPSP), 213-246 (REVEFAFNHIRHSPNNESPWSYLKGLFKGQKIST), and 287-321 (NSLNICKLLSETIDPIHKNYWNFKYNTISDQLKLI).

The protein belongs to the protein prenyltransferase subunit alpha family. Heterodimer of fntA and fntB (farnesyltransferase). Heterodimer of an alpha and a beta subunit. It depends on Mg(2+) as a cofactor.

The catalysed reaction is L-cysteinyl-[protein] + (2E,6E)-farnesyl diphosphate = S-(2E,6E)-farnesyl-L-cysteinyl-[protein] + diphosphate. It catalyses the reaction geranylgeranyl diphosphate + L-cysteinyl-[protein] = S-geranylgeranyl-L-cysteinyl-[protein] + diphosphate. Its function is as follows. Catalyzes the transfer of a farnesyl or geranyl-geranyl moiety from farnesyl or geranyl-geranyl diphosphate to a cysteine at the fourth position from the C-terminus of several proteins having the C-terminal sequence Cys-aliphatic-aliphatic-X. The alpha subunit is thought to participate in a stable complex with the substrate. The beta subunit binds the peptide substrate. This chain is Protein farnesyltransferase/geranylgeranyltransferase type-1 subunit alpha (fntA), found in Dictyostelium discoideum (Social amoeba).